The following is a 678-amino-acid chain: uncharacterized protein (678 aa).

The tract at residues 1-26 (MGVHFDDNANTTWEATDPGVSSDCDG) is disordered. 9 consecutive transmembrane segments (helical) span residues 119–139 (LLLLIVYCCFWMRIFYSLIYP), 245–265 (SFPCASAVHAGVISPFYGGCT), 317–337 (AAVVALNMLFGLPIFYLYDSI), 340–360 (YWINTIVGYWTLVLSLDPPLL), 371–391 (ELFSVGFQRLLPLCFVLYVVW), 405–425 (IAKVILWYPTFWLGISNNVTF), 443–463 (GALTAVGSIAATILTCAVIQA), 475–495 (YFKIYICFIGGLIALGSLPGL), and 519–539 (AYLFQGILVGLILSGVARWDF).

Its subcellular location is the vacuole membrane. This is an uncharacterized protein from Saccharomyces cerevisiae (strain ATCC 204508 / S288c) (Baker's yeast).